Consider the following 98-residue polypeptide: Small ribosomal subunit protein bS20 (98 aa).

A compositionally biased stretch (basic residues) spans M1 to P12. A disordered region spans residues M1–R31.

The protein belongs to the bacterial ribosomal protein bS20 family.

Its function is as follows. Binds directly to 16S ribosomal RNA. This Chlamydia trachomatis serovar L2 (strain ATCC VR-902B / DSM 19102 / 434/Bu) protein is Small ribosomal subunit protein bS20.